The sequence spans 302 residues: tRNA-cytidine(32) 2-sulfurtransferase (302 aa).

Positions 44 to 49 (SGGKDS) match the PP-loop motif motif. Positions 119, 122, and 210 each coordinate [4Fe-4S] cluster.

It belongs to the TtcA family. In terms of assembly, homodimer. Mg(2+) serves as cofactor. It depends on [4Fe-4S] cluster as a cofactor.

The protein resides in the cytoplasm. It catalyses the reaction cytidine(32) in tRNA + S-sulfanyl-L-cysteinyl-[cysteine desulfurase] + AH2 + ATP = 2-thiocytidine(32) in tRNA + L-cysteinyl-[cysteine desulfurase] + A + AMP + diphosphate + H(+). It functions in the pathway tRNA modification. In terms of biological role, catalyzes the ATP-dependent 2-thiolation of cytidine in position 32 of tRNA, to form 2-thiocytidine (s(2)C32). The sulfur atoms are provided by the cysteine/cysteine desulfurase (IscS) system. In Tolumonas auensis (strain DSM 9187 / NBRC 110442 / TA 4), this protein is tRNA-cytidine(32) 2-sulfurtransferase.